Reading from the N-terminus, the 222-residue chain is Octanoyltransferase (222 aa).

The 176-residue stretch at 35-210 (ETTPDELWLV…EFVHLLGYPK (176 aa)) folds into the BPL/LPL catalytic domain. Substrate contacts are provided by residues 74-81 (RGGQVTYH), 141-143 (SLG), and 154-156 (GLA). Cys172 (acyl-thioester intermediate) is an active-site residue.

Belongs to the LipB family.

It is found in the cytoplasm. The enzyme catalyses octanoyl-[ACP] + L-lysyl-[protein] = N(6)-octanoyl-L-lysyl-[protein] + holo-[ACP] + H(+). The protein operates within protein modification; protein lipoylation via endogenous pathway; protein N(6)-(lipoyl)lysine from octanoyl-[acyl-carrier-protein]: step 1/2. In terms of biological role, catalyzes the transfer of endogenously produced octanoic acid from octanoyl-acyl-carrier-protein onto the lipoyl domains of lipoate-dependent enzymes. Lipoyl-ACP can also act as a substrate although octanoyl-ACP is likely to be the physiological substrate. The polypeptide is Octanoyltransferase (Serratia proteamaculans (strain 568)).